The chain runs to 306 residues: Curved DNA-binding protein (306 aa).

Positions 5 to 69 (DYYAIMGVKP…QRRAEYDQMW (65 aa)) constitute a J domain.

It localises to the cytoplasm. Its subcellular location is the nucleoid. DNA-binding protein that preferentially recognizes a curved DNA sequence. It is probably a functional analog of DnaJ; displays overlapping activities with DnaJ, but functions under different conditions, probably acting as a molecular chaperone in an adaptive response to environmental stresses other than heat shock. Lacks autonomous chaperone activity; binds native substrates and targets them for recognition by DnaK. Its activity is inhibited by the binding of CbpM. The polypeptide is Curved DNA-binding protein (Escherichia coli O127:H6 (strain E2348/69 / EPEC)).